A 234-amino-acid polypeptide reads, in one-letter code: Peptidase E (234 aa).

Catalysis depends on charge relay system residues serine 123, aspartate 138, and histidine 160.

Belongs to the peptidase S51 family.

It localises to the cytoplasm. It carries out the reaction Dipeptidase E catalyzes the hydrolysis of dipeptides Asp-|-Xaa. It does not act on peptides with N-terminal Glu, Asn or Gln, nor does it cleave isoaspartyl peptides.. In terms of biological role, hydrolyzes dipeptides containing N-terminal aspartate residues. May play a role in allowing the cell to use peptide aspartate to spare carbon otherwise required for the synthesis of the aspartate family of amino acids. The sequence is that of Peptidase E from Actinobacillus pleuropneumoniae serotype 3 (strain JL03).